Consider the following 146-residue polypeptide: Hemoglobin subunit beta-1 (146 aa).

Serine 1 is subject to N-acetylserine. The 145-residue stretch at 2-146 folds into the Globin domain; sequence FLSAEEKGLV…VASALAHRYH (145 aa). Lysine 17 carries the post-translational modification N6-succinyllysine. 2 positions are modified to phosphoserine: serine 44 and serine 50. Residue lysine 59 is modified to N6-succinyllysine. Residues histidine 63 and histidine 92 each contribute to the heme b site. The residue at position 104 (arginine 104) is an Asymmetric dimethylarginine.

It belongs to the globin family. Heterotetramer of two alpha chains and two beta chains. As to expression, red blood cells.

In terms of biological role, involved in oxygen transport from the lung to the various peripheral tissues. This Panthera leo (Lion) protein is Hemoglobin subunit beta-1 (HBB1).